The sequence spans 275 residues: MAIIKCKPTSAGRRHVVKVVNTDLHKGKPFAGLLAKKSKSGGRNNTGRITVRHVGGGHKQHYRIIDFKRIKDGIPAKVERLEYDPNRTANIALVLYADGERRYILAAKGMQAGDKIQSGIDAEIKVGNALPLRNIPVGSVVHAVEMKPGKGAQIARSAGTYVQVVARDGEYATLRLRSGEMRKVPVDCRATMGEVGNAEHMLRQLGKAGAKRWRGVRPTVRGVAMNPIDHPHGGGEGRTSGGRHPVSPWGVPTKGYKTRSNKRTDKYIVRRRNKK.

Positions 223–275 (VAMNPIDHPHGGGEGRTSGGRHPVSPWGVPTKGYKTRSNKRTDKYIVRRRNKK) are disordered.

It belongs to the universal ribosomal protein uL2 family. Part of the 50S ribosomal subunit. Forms a bridge to the 30S subunit in the 70S ribosome.

In terms of biological role, one of the primary rRNA binding proteins. Required for association of the 30S and 50S subunits to form the 70S ribosome, for tRNA binding and peptide bond formation. It has been suggested to have peptidyltransferase activity; this is somewhat controversial. Makes several contacts with the 16S rRNA in the 70S ribosome. The polypeptide is Large ribosomal subunit protein uL2 (Shewanella woodyi (strain ATCC 51908 / MS32)).